Reading from the N-terminus, the 66-residue chain is Stress-associated endoplasmic reticulum protein 1 (66 aa).

The interval 1–31 (MVAKQRIRMANEKHSKNITQRGNVAKTSRNA) is disordered. Over residues 17–30 (NITQRGNVAKTSRN) the composition is skewed to polar residues. The chain crosses the membrane as a helical span at residues 39–59 (GPWLLALFIFVVCGSAIFQII).

Belongs to the RAMP4 family. Interacts with SEC61B, SEC61A1 and the SEC61 complex. Interacts with CANX.

Its subcellular location is the membrane. The protein resides in the endoplasmic reticulum membrane. Functionally, interacts with target proteins during their translocation into the lumen of the endoplasmic reticulum. Protects unfolded target proteins against degradation during ER stress. May facilitate glycosylation of target proteins after termination of ER stress. May modulate the use of N-glycosylation sites on target proteins. This Bos taurus (Bovine) protein is Stress-associated endoplasmic reticulum protein 1 (SERP1).